Consider the following 545-residue polypeptide: Sensory neuron membrane protein 1 (545 aa).

Residues 1–10 (MELKERNFKK) are Cytoplasmic-facing. The helical transmembrane segment at 11–31 (IGLICVAVLLCGMVFSYGIFP) threads the bilayer. At 32–464 (SILRFMIKQN…LFLGLKFNAT (433 aa)) the chain is on the extracellular side. Asn-69, Asn-214, and Asn-227 each carry an N-linked (GlcNAc...) asparagine glycan. 3 cysteine pairs are disulfide-bonded: Cys-266/Cys-331, Cys-295/Cys-351, and Cys-333/Cys-340. Residues Asn-444 and Asn-462 are each glycosylated (N-linked (GlcNAc...) asparagine). The helical transmembrane segment at 465–485 (VKWLTIIIGTVGAVGSAYMYF) threads the bilayer. At 486–545 (RKETKTTDVAPVDVSTPDTNPSSAKDGVVNVSLGRNLPPVIDGLDKPPKLRATELQQERY) the chain is on the cytoplasmic side.

Belongs to the CD36 family. Selectively expressed in antenna.

It is found in the cell membrane. Functionally, plays an olfactory role that is not restricted to pheromone sensitivity. The protein is Sensory neuron membrane protein 1 (snmp1) of Anopheles gambiae (African malaria mosquito).